The following is a 333-amino-acid chain: 4-hydroxyproline 2-epimerase (333 aa).

The Proton acceptor role is filled by Cys91. Substrate contacts are provided by residues 92–93, His225, and Asp250; that span reads GH. Cys254 acts as the Proton donor in catalysis. Position 255–256 (255–256) interacts with substrate; sequence GT.

Belongs to the proline racemase family.

The enzyme catalyses trans-4-hydroxy-L-proline = cis-4-hydroxy-D-proline. Functionally, catalyzes the epimerization of trans-4-hydroxy-L-proline (t4LHyp) to cis-4-hydroxy-D-proline (c4DHyp). Is likely involved in a degradation pathway that converts t4LHyp to alpha-ketoglutarate. Displays no proline racemase activity. The polypeptide is 4-hydroxyproline 2-epimerase (Streptosporangium roseum (strain ATCC 12428 / DSM 43021 / JCM 3005 / KCTC 9067 / NCIMB 10171 / NRRL 2505 / NI 9100)).